A 180-amino-acid polypeptide reads, in one-letter code: Large ribosomal subunit protein uL6 (180 aa).

The protein belongs to the universal ribosomal protein uL6 family. As to quaternary structure, part of the 50S ribosomal subunit.

In terms of biological role, this protein binds to the 23S rRNA, and is important in its secondary structure. It is located near the subunit interface in the base of the L7/L12 stalk, and near the tRNA binding site of the peptidyltransferase center. This Mesoplasma florum (strain ATCC 33453 / NBRC 100688 / NCTC 11704 / L1) (Acholeplasma florum) protein is Large ribosomal subunit protein uL6.